Here is a 262-residue protein sequence, read N- to C-terminus: uncharacterized protein (262 aa).

In terms of domain architecture, S4 RNA-binding spans 6–70 (LRINQFLAHY…LKNKKFSVLV (65 aa)). The active-site Nucleophile is D108.

Belongs to the pseudouridine synthase RsuA family.

The enzyme catalyses a uridine in RNA = a pseudouridine in RNA. This is an uncharacterized protein from Helicobacter pylori (strain ATCC 700392 / 26695) (Campylobacter pylori).